The following is a 717-amino-acid chain: Methylcrotonoyl-CoA carboxylase subunit alpha, mitochondrial (717 aa).

The transit peptide at 1 to 38 (MAAAALLAAVDRNQLRRVPILLLQPREWAWKLRTMKYG) directs the protein to the mitochondrion. The region spanning 45–490 (ITKVLIANRG…HTDFIPQHHK (446 aa)) is the Biotin carboxylation domain. ATP is bound at residue lysine 159. One can recognise an ATP-grasp domain in the interval 163 to 360 (KSIMAAAGVP…LVEWQLRIAA (198 aa)). Residues lysine 180 and lysine 193 each carry the N6-acetyllysine modification. ATP is bound by residues lysine 201 and 207–208 (GG). Lysine 233 is subject to N6-acetyllysine. Histidine 251, histidine 278, and glutamate 318 together coordinate ATP. Arginine 335 is a catalytic residue. Residue lysine 490 is modified to N6-acetyllysine. An N6-acetyllysine; alternate modification is found at lysine 577. Lysine 577 carries the post-translational modification N6-succinyllysine; alternate. The region spanning 622–711 (SIEVGIPVPK…NRHAPLVEFE (90 aa)) is the Biotinyl-binding domain. N6-biotinyllysine is present on lysine 677.

In terms of assembly, probably a dodecamer composed of six biotin-containing alpha subunits (MCCC1) and six beta (MCCC2) subunits. Interacts (via the biotin carboxylation domain) with SIRT4. The cofactor is biotin. Acetylated.

The protein localises to the mitochondrion matrix. It catalyses the reaction 3-methylbut-2-enoyl-CoA + hydrogencarbonate + ATP = 3-methyl-(2E)-glutaconyl-CoA + ADP + phosphate + H(+). It functions in the pathway amino-acid degradation; L-leucine degradation; (S)-3-hydroxy-3-methylglutaryl-CoA from 3-isovaleryl-CoA: step 2/3. Biotin-attachment subunit of the 3-methylcrotonyl-CoA carboxylase, an enzyme that catalyzes the conversion of 3-methylcrotonyl-CoA to 3-methylglutaconyl-CoA, a critical step for leucine and isovaleric acid catabolism. The polypeptide is Methylcrotonoyl-CoA carboxylase subunit alpha, mitochondrial (Mccc1) (Mus musculus (Mouse)).